Reading from the N-terminus, the 161-residue chain is MAEVANNEQQGPQFNIQRVYTKDISFETPNSPAVFQKEWNPEVKLDLDTRSNKLSDDVYEVVLSLTVTAKNGEETAFLCEVQQAGIFAIAGLTEQQLAHSLGAYCPNVLFPYAREAIGSLVSRGTFPQLNLAPVNFDALFAQYVQQRQAAAAEAPAEEANA.

The protein belongs to the SecB family. As to quaternary structure, homotetramer, a dimer of dimers. One homotetramer interacts with 1 SecA dimer.

It localises to the cytoplasm. Its function is as follows. One of the proteins required for the normal export of preproteins out of the cell cytoplasm. It is a molecular chaperone that binds to a subset of precursor proteins, maintaining them in a translocation-competent state. It also specifically binds to its receptor SecA. This chain is Protein-export protein SecB, found in Shewanella pealeana (strain ATCC 700345 / ANG-SQ1).